We begin with the raw amino-acid sequence, 76 residues long: Conotoxin VnMEKL-0111 (76 aa).

A signal peptide spans 1-18 (MKLTILFLVAAVLMSTQA). The propeptide occupies 19–45 (LIQHDGEKSQKAKMKFLTARTLSAKTR). 3 disulfide bridges follow: cysteine 49–cysteine 65, cysteine 56–cysteine 70, and cysteine 64–cysteine 74.

It belongs to the conotoxin O2 superfamily. In terms of tissue distribution, expressed by the venom duct.

It is found in the secreted. This Conus ventricosus (Mediterranean cone) protein is Conotoxin VnMEKL-0111.